The chain runs to 451 residues: Chromosomal replication initiator protein DnaA (451 aa).

Residues 1 to 71 form a domain I, interacts with DnaA modulators region; sequence MSEKEIWDKV…QAIIYDVIGY (71 aa). The domain II stretch occupies residues 71–112; the sequence is YEVKPHFISEDELASYNNVNTQEVQEPQVQHSSIDDKTWGKE. Positions 113 to 329 are domain III, AAA+ region; that stretch reads QFNMHNTFDT…GALTRLLAYS (217 aa). Residues glycine 157, glycine 159, lysine 160, and threonine 161 each coordinate ATP. The tract at residues 330–451 is domain IV, binds dsDNA; sequence KLQGKPITTE…ENLEKEIRNQ (122 aa).

This sequence belongs to the DnaA family. As to quaternary structure, oligomerizes as a right-handed, spiral filament on DNA at oriC.

The protein localises to the cytoplasm. Its function is as follows. Plays an essential role in the initiation and regulation of chromosomal replication. ATP-DnaA binds to the origin of replication (oriC) to initiate formation of the DNA replication initiation complex once per cell cycle. Binds the DnaA box (a 9 base pair repeat at the origin) and separates the double-stranded (ds)DNA. Forms a right-handed helical filament on oriC DNA; dsDNA binds to the exterior of the filament while single-stranded (ss)DNA is stabiized in the filament's interior. The ATP-DnaA-oriC complex binds and stabilizes one strand of the AT-rich DNA unwinding element (DUE), permitting loading of DNA polymerase. After initiation quickly degrades to an ADP-DnaA complex that is not apt for DNA replication. Binds acidic phospholipids. This is Chromosomal replication initiator protein DnaA from Staphylococcus epidermidis (strain ATCC 35984 / DSM 28319 / BCRC 17069 / CCUG 31568 / BM 3577 / RP62A).